Reading from the N-terminus, the 414-residue chain is Serine/threonine transporter SstT (414 aa).

At 2-15 (TTQRSPGLFRRLAH) the chain is on the cytoplasmic side. The chain crosses the membrane as a helical span at residues 16 to 36 (GSLVKQILVGLVLGILLAWIS). At 37–45 (KPAAEAVGL) the chain is on the periplasmic side. Residues 46–66 (LGTLFVGALKAVAPILVLMLV) traverse the membrane as a helical segment. Topologically, residues 67-83 (MASIANHQHGQKTNILP) are cytoplasmic. A helical membrane pass occupies residues 84 to 104 (ILFLYLLGTFSAALAAVVFSF). The Periplasmic portion of the chain corresponds to 105–142 (AFPSTLHLSSSAGDISPPSGIVEVMRGLVMSMVSNPID). The helical transmembrane segment at 143 to 163 (ALLKGNYIGILVWAIGLGFAL) threads the bilayer. The Cytoplasmic portion of the chain corresponds to 164 to 179 (RHGNETTKNLVNDMSN). The helical transmembrane segment at 180–200 (AVTFMVKLVIRFAPIGIFGLV) threads the bilayer. Topologically, residues 201–217 (SSTLATTGFSTLWGYAQ) are periplasmic. The helical transmembrane segment at 218–238 (LLVVLVGCMLLVALVVNPLLV) threads the bilayer. Over 239 to 299 (WWKIRRNPFP…VSIPLGATIN (61 aa)) the chain is Cytoplasmic. Residues 300–320 (MAGAAITITVLTLAAVNTLGI) traverse the membrane as a helical segment. The Periplasmic portion of the chain corresponds to 321–331 (PVDLPTALLLS). The chain crosses the membrane as a helical span at residues 332 to 352 (VVASLCACGASGVAGGSLLLI). The Cytoplasmic portion of the chain corresponds to 353–414 (PLACNMFGIS…DRLANSALRN (62 aa)).

Belongs to the dicarboxylate/amino acid:cation symporter (DAACS) (TC 2.A.23) family.

It is found in the cell inner membrane. The enzyme catalyses L-serine(in) + Na(+)(in) = L-serine(out) + Na(+)(out). It catalyses the reaction L-threonine(in) + Na(+)(in) = L-threonine(out) + Na(+)(out). Functionally, involved in the import of serine and threonine into the cell, with the concomitant import of sodium (symport system). The polypeptide is Serine/threonine transporter SstT (Shigella dysenteriae serotype 1 (strain Sd197)).